Consider the following 189-residue polypeptide: Peptidyl-tRNA hydrolase (189 aa).

A tRNA-binding site is contributed by tyrosine 15. Residue histidine 20 is the Proton acceptor of the active site. 3 residues coordinate tRNA: phenylalanine 66, asparagine 68, and asparagine 114.

Belongs to the PTH family. In terms of assembly, monomer.

It localises to the cytoplasm. The catalysed reaction is an N-acyl-L-alpha-aminoacyl-tRNA + H2O = an N-acyl-L-amino acid + a tRNA + H(+). In terms of biological role, hydrolyzes ribosome-free peptidyl-tRNAs (with 1 or more amino acids incorporated), which drop off the ribosome during protein synthesis, or as a result of ribosome stalling. Functionally, catalyzes the release of premature peptidyl moieties from peptidyl-tRNA molecules trapped in stalled 50S ribosomal subunits, and thus maintains levels of free tRNAs and 50S ribosomes. The polypeptide is Peptidyl-tRNA hydrolase (Streptococcus pyogenes serotype M6 (strain ATCC BAA-946 / MGAS10394)).